We begin with the raw amino-acid sequence, 223 residues long: Voltage-dependent calcium channel gamma-1 subunit (223 aa).

The Cytoplasmic portion of the chain corresponds to 1–10; the sequence is MSQTKTAKVR. A helical membrane pass occupies residues 11-29; the sequence is VTLFFILAGGVLAMVAVVT. Residues 30–109 are Extracellular-facing; that stretch reads DHWAVLSPHL…TQKEYSISAA (80 aa). Asparagine 43 and asparagine 80 each carry an N-linked (GlcNAc...) asparagine glycan. A disulfide bridge links cysteine 57 with cysteine 81. Residues 110 to 130 traverse the membrane as a helical segment; it reads AIAIFSLGFIIIGSICAFLSF. The Cytoplasmic portion of the chain corresponds to 131 to 135; sequence GNKRD. Residues 136–156 traverse the membrane as a helical segment; that stretch reads YLLRPASMFYAFAGLCLIVSV. Residues 157–180 lie on the Extracellular side of the membrane; sequence EVMRQSVKRMIDSEDTVWIEYYYS. Residues 181–205 traverse the membrane as a helical segment; the sequence is WSFACACAGFTLLFLGGLFLLLFSL. The Cytoplasmic segment spans residues 206–223; the sequence is PRMPQNPWESCMDTESEH.

This sequence belongs to the PMP-22/EMP/MP20 family. CACNG subfamily. As to quaternary structure, component of a calcium channel complex consisting of a pore-forming alpha subunit (CACNA1S) and the ancillary subunits CACNB1 or CACNB2, CACNG1 and CACNA2D1. The channel complex contains alpha, beta, gamma and delta subunits in a 1:1:1:1 ratio, i.e. it contains either CACNB1 or CACNB2. In terms of processing, N-glycosylated. As to expression, skeletal muscle.

It is found in the cell membrane. Its subcellular location is the sarcolemma. In terms of biological role, regulatory subunit of the voltage-gated calcium channel that gives rise to L-type calcium currents in skeletal muscle. Regulates channel inactivation kinetics. The protein is Voltage-dependent calcium channel gamma-1 subunit (Cacng1) of Rattus norvegicus (Rat).